A 279-amino-acid chain; its full sequence is Cell division protein FtsQ (279 aa).

Residues 1-28 are disordered; sequence MTPMKKQLDKSLGSRRGATATRAKERAD. Topologically, residues 1 to 48 are cytoplasmic; it reads MTPMKKQLDKSLGSRRGATATRAKERADNRNTGPAAIVRLLAFIPWNR. The chain crosses the membrane as a helical span at residues 49-69; sequence VLLHVSIFCFWLLVLSALIAG. The Periplasmic portion of the chain corresponds to 70 to 279; sequence VKWLDRPVAT…WKADVTPEQG (210 aa). In terms of domain architecture, POTRA spans 75 to 144; it reads RPVATVQVVG…DAVQVDLEEE (70 aa).

Belongs to the FtsQ/DivIB family. FtsQ subfamily. As to quaternary structure, part of a complex composed of FtsB, FtsL and FtsQ.

Its subcellular location is the cell inner membrane. Essential cell division protein. May link together the upstream cell division proteins, which are predominantly cytoplasmic, with the downstream cell division proteins, which are predominantly periplasmic. May control correct divisome assembly. This Hahella chejuensis (strain KCTC 2396) protein is Cell division protein FtsQ.